Here is a 95-residue protein sequence, read N- to C-terminus: UPF0235 protein Sama_2480 (95 aa).

This sequence belongs to the UPF0235 family.

This is UPF0235 protein Sama_2480 from Shewanella amazonensis (strain ATCC BAA-1098 / SB2B).